The chain runs to 518 residues: Membrane-bound lytic murein transglycosylase F (518 aa).

Positions 1-21 (MKKLKINYLFIGILALLLAVA) are cleaved as a signal peptide. The tract at residues 22 to 269 (LWPSIPWFGK…RIEEKYLGHG (248 aa)) is non-LT domain. The tract at residues 270-518 (DDFDYVDTRT…SRKGSEEKQN (249 aa)) is LT domain. Glu-314 is an active-site residue.

The protein in the N-terminal section; belongs to the bacterial solute-binding protein 3 family. This sequence in the C-terminal section; belongs to the transglycosylase Slt family.

The protein resides in the cell outer membrane. It carries out the reaction Exolytic cleavage of the (1-&gt;4)-beta-glycosidic linkage between N-acetylmuramic acid (MurNAc) and N-acetylglucosamine (GlcNAc) residues in peptidoglycan, from either the reducing or the non-reducing ends of the peptidoglycan chains, with concomitant formation of a 1,6-anhydrobond in the MurNAc residue.. Functionally, murein-degrading enzyme that degrades murein glycan strands and insoluble, high-molecular weight murein sacculi, with the concomitant formation of a 1,6-anhydromuramoyl product. Lytic transglycosylases (LTs) play an integral role in the metabolism of the peptidoglycan (PG) sacculus. Their lytic action creates space within the PG sacculus to allow for its expansion as well as for the insertion of various structures such as secretion systems and flagella. This is Membrane-bound lytic murein transglycosylase F from Escherichia coli O6:K15:H31 (strain 536 / UPEC).